A 267-amino-acid polypeptide reads, in one-letter code: 5'-nucleotidase SurE (267 aa).

A divalent metal cation-binding residues include Asp14, Asp15, Ser45, and Asn100.

This sequence belongs to the SurE nucleotidase family. The cofactor is a divalent metal cation.

It localises to the cytoplasm. The catalysed reaction is a ribonucleoside 5'-phosphate + H2O = a ribonucleoside + phosphate. Functionally, nucleotidase that shows phosphatase activity on nucleoside 5'-monophosphates. This chain is 5'-nucleotidase SurE, found in Methanosarcina mazei (strain ATCC BAA-159 / DSM 3647 / Goe1 / Go1 / JCM 11833 / OCM 88) (Methanosarcina frisia).